A 416-amino-acid polypeptide reads, in one-letter code: Glutamyl-tRNA reductase (416 aa).

Residues 49–52 (TCNR), S105, 110–112 (EPQ), and Q116 contribute to the substrate site. C50 (nucleophile) is an active-site residue. Residue 185–190 (GAGETI) participates in NADP(+) binding.

It belongs to the glutamyl-tRNA reductase family. Homodimer.

The catalysed reaction is (S)-4-amino-5-oxopentanoate + tRNA(Glu) + NADP(+) = L-glutamyl-tRNA(Glu) + NADPH + H(+). Its pathway is porphyrin-containing compound metabolism; protoporphyrin-IX biosynthesis; 5-aminolevulinate from L-glutamyl-tRNA(Glu): step 1/2. Functionally, catalyzes the NADPH-dependent reduction of glutamyl-tRNA(Glu) to glutamate 1-semialdehyde (GSA). The chain is Glutamyl-tRNA reductase from Shewanella pealeana (strain ATCC 700345 / ANG-SQ1).